Consider the following 473-residue polypeptide: Trehalose-6-phosphate synthase (473 aa).

D-glucose 6-phosphate is bound at residue Arg-10. Position 21–22 (21–22) interacts with UDP-alpha-D-glucose; sequence GG. D-glucose 6-phosphate is bound by residues Tyr-76 and Asp-130. The UDP-alpha-D-glucose site is built by Arg-262 and Lys-267. Arg-300 is a D-glucose 6-phosphate binding site. UDP-alpha-D-glucose-binding positions include Phe-339 and 365–369; that span reads LVAKE.

Belongs to the glycosyltransferase 20 family. Homotetramer.

It catalyses the reaction D-glucose 6-phosphate + UDP-alpha-D-glucose = alpha,alpha-trehalose 6-phosphate + UDP + H(+). It participates in glycan biosynthesis; trehalose biosynthesis. Its function is as follows. Probably involved in the osmoprotection via the biosynthesis of trehalose. Catalyzes the transfer of glucose from UDP-alpha-D-glucose (UDP-Glc) to D-glucose 6-phosphate (Glc-6-P) to form trehalose-6-phosphate. Acts with retention of the anomeric configuration of the UDP-sugar donor. The protein is Trehalose-6-phosphate synthase (otsA) of Salmonella arizonae (strain ATCC BAA-731 / CDC346-86 / RSK2980).